The sequence spans 193 residues: MKNSSIVLASASPRRSELLESAGIQFRVVPADINEEPLPGEEPVDHVQRLAEGKARAAAELAEGRFFLGADTIVLCDGEIMGKPKDAVDAERMLKKLSGVPHEVVTGFAIYDRERKGAVVEAVRTKVFFKHLRDEEIRDYVATGCPFDKAGAYAIQGGAAHMVRKIEGSYTNVVGLPLCEVVDALRVIGALGN.

Residue Asp71 is the Proton acceptor of the active site.

The protein belongs to the Maf family. YhdE subfamily. The cofactor is a divalent metal cation.

Its subcellular location is the cytoplasm. The catalysed reaction is dTTP + H2O = dTMP + diphosphate + H(+). It carries out the reaction UTP + H2O = UMP + diphosphate + H(+). In terms of biological role, nucleoside triphosphate pyrophosphatase that hydrolyzes dTTP and UTP. May have a dual role in cell division arrest and in preventing the incorporation of modified nucleotides into cellular nucleic acids. This is dTTP/UTP pyrophosphatase from Geobacter sp. (strain M21).